We begin with the raw amino-acid sequence, 449 residues long: Hyaluronidase-4 (449 aa).

The signal sequence occupies residues 1–23; that stretch reads MYHIWIKFLAAWIFLKRFNGVHV. Cystine bridges form between Cys47-Cys340 and Cys211-Cys227. Asn67, Asn103, and Asn111 each carry an N-linked (GlcNAc...) asparagine glycan. Glu135 serves as the catalytic Proton donor. Asn153 is a glycosylation site (N-linked (GlcNAc...) asparagine). Asn357 carries an N-linked (GlcNAc...) asparagine glycan. Disulfide bonds link Cys365/Cys376, Cys370/Cys427, and Cys429/Cys438. An N-linked (GlcNAc...) asparagine glycan is attached at Asn401. Positions 427–438 constitute an EGF-like domain; sequence CQCYQGWKGLYC.

This sequence belongs to the glycosyl hydrolase 56 family. Monomer. As to expression, expressed by the venom gland.

The protein localises to the secreted. The enzyme catalyses Random hydrolysis of (1-&gt;4)-linkages between N-acetyl-beta-D-glucosamine and D-glucuronate residues in hyaluronate.. In terms of biological role, snake venom endo-hyaluronidase that degrades hyaluronan to smaller oligosaccharide fragments. In venom, it is not toxic by itself, but increases the diffusion of other venom proteins by degrading the extracellular matrix. In addition, it displays antiedematogenic activity. The chain is Hyaluronidase-4 from Cerastes cerastes (Horned desert viper).